Reading from the N-terminus, the 348-residue chain is tRNA pseudouridine synthase D (348 aa).

Catalysis depends on Asp81, which acts as the Nucleophile. The 147-residue stretch at 158–304 (GVPNYFGAQR…MRHERRSIEL (147 aa)) folds into the TRUD domain.

This sequence belongs to the pseudouridine synthase TruD family.

The enzyme catalyses uridine(13) in tRNA = pseudouridine(13) in tRNA. Responsible for synthesis of pseudouridine from uracil-13 in transfer RNAs. This chain is tRNA pseudouridine synthase D, found in Aliivibrio salmonicida (strain LFI1238) (Vibrio salmonicida (strain LFI1238)).